Here is a 331-residue protein sequence, read N- to C-terminus: Phenylalanine--tRNA ligase alpha subunit (331 aa).

Glu-258 is a binding site for Mg(2+).

Belongs to the class-II aminoacyl-tRNA synthetase family. Phe-tRNA synthetase alpha subunit type 1 subfamily. In terms of assembly, tetramer of two alpha and two beta subunits. Mg(2+) is required as a cofactor.

The protein resides in the cytoplasm. The enzyme catalyses tRNA(Phe) + L-phenylalanine + ATP = L-phenylalanyl-tRNA(Phe) + AMP + diphosphate + H(+). The sequence is that of Phenylalanine--tRNA ligase alpha subunit (pheS) from Synechocystis sp. (strain ATCC 27184 / PCC 6803 / Kazusa).